We begin with the raw amino-acid sequence, 235 residues long: Leucyl/phenylalanyl-tRNA--protein transferase (235 aa).

Belongs to the L/F-transferase family.

It is found in the cytoplasm. The enzyme catalyses N-terminal L-lysyl-[protein] + L-leucyl-tRNA(Leu) = N-terminal L-leucyl-L-lysyl-[protein] + tRNA(Leu) + H(+). It catalyses the reaction N-terminal L-arginyl-[protein] + L-leucyl-tRNA(Leu) = N-terminal L-leucyl-L-arginyl-[protein] + tRNA(Leu) + H(+). The catalysed reaction is L-phenylalanyl-tRNA(Phe) + an N-terminal L-alpha-aminoacyl-[protein] = an N-terminal L-phenylalanyl-L-alpha-aminoacyl-[protein] + tRNA(Phe). Functions in the N-end rule pathway of protein degradation where it conjugates Leu, Phe and, less efficiently, Met from aminoacyl-tRNAs to the N-termini of proteins containing an N-terminal arginine or lysine. In Azoarcus sp. (strain BH72), this protein is Leucyl/phenylalanyl-tRNA--protein transferase.